The sequence spans 163 residues: Peptide deformylase 3 (163 aa).

Fe cation-binding residues include C91 and H133. The active site involves E134. H137 provides a ligand contact to Fe cation.

This sequence belongs to the polypeptide deformylase family. Requires Fe(2+) as cofactor.

It catalyses the reaction N-terminal N-formyl-L-methionyl-[peptide] + H2O = N-terminal L-methionyl-[peptide] + formate. Functionally, removes the formyl group from the N-terminal Met of newly synthesized proteins. Requires at least a dipeptide for an efficient rate of reaction. N-terminal L-methionine is a prerequisite for activity but the enzyme has broad specificity at other positions. This chain is Peptide deformylase 3, found in Shewanella oneidensis (strain ATCC 700550 / JCM 31522 / CIP 106686 / LMG 19005 / NCIMB 14063 / MR-1).